The chain runs to 682 residues: Protein SPT2 homolog (682 aa).

An important for interaction with DNA region spans residues 1–569; the sequence is MDFREILLIA…PLLSGYRSAQ (569 aa). K37 is covalently cross-linked (Glycyl lysine isopeptide (Lys-Gly) (interchain with G-Cter in SUMO2)). Positions 46–82 form a coiled coil; that stretch reads AFLRRKEEELRQKALEEKKRKEELVKKRIELKHDKKA. A disordered region spans residues 80-170; sequence KKARAMAKRT…SAPSPMNFTD (91 aa). The segment covering 101–111 has biased composition (basic and acidic residues); the sequence is VEEKTKKKQLV. Residues 121–131 show a composition bias toward acidic residues; it reads QEYDVEEEDFI. The segment covering 156 to 165 has biased composition (low complexity); the sequence is KAPLKSAPSP. K186 participates in a covalent cross-link: Glycyl lysine isopeptide (Lys-Gly) (interchain with G-Cter in SUMO2). Positions 187–208 are enriched in basic and acidic residues; sequence VVKKAEDRPLTAEELREREFLE. 2 disordered regions span residues 187 to 533 and 549 to 595; these read VVKK…TKPR and RSSN…DEYD. Polar residues-rich tracts occupy residues 267 to 280, 317 to 334, 371 to 393, 400 to 409, and 419 to 432; these read STASEKQAALSSPK, STCSPSVPKTPASGTQKS, PGSNSGSAPGQPNPGTARPTLSS, QNGSSSSGPE, and ASNSHLSGRTLNGT. S277 carries the post-translational modification Phosphoserine. Composition is skewed to low complexity over residues 435–460 and 490–504; these read PGRPASSSSGPGRPISGSAGSGRPVG and SGPGRSISGSIPAGR. Residues 570-682 are important for interaction with histones; it reads GPQRLPFPTG…RRKAKKLKRH (113 aa). Residue K581 is modified to N6-acetyllysine. Acidic residues predominate over residues 586-595; that stretch reads YEEDDDDEYD. S596 bears the Phosphoserine mark. Composition is skewed to basic and acidic residues over residues 641–652 and 663–672; these read SWKEQQKEEAKS and EMRREEEELK. A disordered region spans residues 641-682; it reads SWKEQQKEEAKSLRLGMQEDLEEMRREEEELKRRKAKKLKRH. Residues 642 to 682 are a coiled coil; the sequence is WKEQQKEEAKSLRLGMQEDLEEMRREEEELKRRKAKKLKRH. Residues 673–682 are compositionally biased toward basic residues; the sequence is RRKAKKLKRH.

The protein belongs to the SPT2 family. In terms of assembly, interacts with histones. Interacts with a heterotetrameric complex formed by histone H3 and H4, especially when the histone tetramer is not bound to DNA. Interacts with histone H3.3.

It is found in the nucleus. Its subcellular location is the nucleolus. Functionally, histone chaperone that stabilizes pre-existing histone tetramers and regulates replication-independent histone exchange on chromatin. Required for normal chromatin refolding in the coding region of transcribed genes, and for the suppression of spurious transcription. Binds DNA and histones and promotes nucleosome assembly (in vitro). Facilitates formation of tetrameric histone complexes containing histone H3 and H4. Modulates RNA polymerase 1-mediated transcription. Binds DNA, with a preference for branched DNA species, such as Y-form DNA and Holliday junction DNA. The chain is Protein SPT2 homolog (Spty2d1) from Mus musculus (Mouse).